The chain runs to 269 residues: MRCTRAIRQTARTGWLTWLAILAVTAPMTSPAWADDPPATVYRYDSRPPEDVFQNGFTAWGNNDNVLEHLTGRSCQVGSSNSAFVSTSSSRRYTEVYLEHRMQEAVEAERAGRGTGHFIGYIYEIRADNNFYGAASSYFEYVDTYGDNAGRILAGALATYQSEYLAHRRIPPENIRTVTRVYHNGITGETTTTEYPNLRYVSQQTRANTNPYTSRRSTASIVGTLVRMAPVTGACMARQAESPEAMAAWSERTGEAMVLVYYESIAYSF.

A signal peptide spans 1–34 (MRCTRAIRQTARTGWLTWLAILAVTAPMTSPAWA).

Belongs to the bacterial exotoxin subunit A family.

This chain is Pertussis toxin subunit 1 homolog (ptxA), found in Bordetella parapertussis (strain 12822 / ATCC BAA-587 / NCTC 13253).